We begin with the raw amino-acid sequence, 452 residues long: Na(+)/H(+) antiporter NhaA (452 aa).

Helical transmembrane passes span 27-47 (FLHIEAMSGVVLLLAAATALI), 78-98 (LHFWVNDVLMTIFFLVAGMEI), 114-134 (ILPIVAAIGGVCIPAIIYLSF), 141-161 (IYGWAVPTATDIAFALGILAL), 172-192 (IILLSLAIIDDIMAVLIIAFF), 201-221 (GLAIAAAGIALVFFFQWISFA), 222-242 (SAWLYVLPGAIIWWGLMVTGI), 316-336 (PWVAYGVMPIFAFANAGVSFA), 346-366 (FLIVLGIIIGLCIGKPLGILA), 388-408 (ILLIGFLAGIGFTMSIFVSML), and 421-441 (IGVLCGSGLSALAGLGYGLIY).

The protein belongs to the NhaA Na(+)/H(+) (TC 2.A.33) antiporter family.

Its subcellular location is the cell inner membrane. The catalysed reaction is Na(+)(in) + 2 H(+)(out) = Na(+)(out) + 2 H(+)(in). In terms of biological role, na(+)/H(+) antiporter that extrudes sodium in exchange for external protons. The polypeptide is Na(+)/H(+) antiporter NhaA (Bartonella bacilliformis (strain ATCC 35685 / KC583 / Herrer 020/F12,63)).